A 273-amino-acid chain; its full sequence is MPAHMIPQVARAVVQSTYSGSLSAIDDNLEPTDDIDQAAYITTGRYVVCALCLATVSDSPTQLSRWVFHHCSDDRRPLIRSMLLASSRHAHALRESREVDMRRISRLVHQADEEDELDAPRQARRIGYVDLHSCDLQNPTPELATRQLCNDPTRTHSTHPHLARSHPYMLPTAALDIDPPEPVTMFATMSRTDGVPMLFNMTHRNVEVLASPAARASLMYALLKLANAKLTPKQRSIMYGPSANDMVAACTKACAATTFRHVGRYAARVVIEE.

It belongs to the aquareoviridae outer capsid VP7 protein family. In terms of assembly, interacts with VP4 and VP6.

Its subcellular location is the virion. In terms of biological role, interacts with VP4 to form the outer icosahedral capsid with an incomplete T=13 symmetry, about 80 nm in diameter, and consisting of 200 VP4-VP7 trimers. The chain is Outer capsid protein VP7 (S10) from Ctenopharyngodon idella (Grass carp).